The chain runs to 412 residues: LL-diaminopimelate aminotransferase (412 aa).

Tyr15 and Gly42 together coordinate substrate. Pyridoxal 5'-phosphate-binding positions include Tyr72, 108 to 109, Tyr132, Asn187, Tyr218, and 246 to 248; these read SK and SFS. Positions 109, 132, and 187 each coordinate substrate. At Lys249 the chain carries N6-(pyridoxal phosphate)lysine. The pyridoxal 5'-phosphate site is built by Arg257 and Asn292. Positions 292 and 388 each coordinate substrate.

This sequence belongs to the class-I pyridoxal-phosphate-dependent aminotransferase family. LL-diaminopimelate aminotransferase subfamily. Homodimer. Pyridoxal 5'-phosphate is required as a cofactor.

It catalyses the reaction (2S,6S)-2,6-diaminopimelate + 2-oxoglutarate = (S)-2,3,4,5-tetrahydrodipicolinate + L-glutamate + H2O + H(+). Its pathway is amino-acid biosynthesis; L-lysine biosynthesis via DAP pathway; LL-2,6-diaminopimelate from (S)-tetrahydrodipicolinate (aminotransferase route): step 1/1. Involved in the synthesis of meso-diaminopimelate (m-DAP or DL-DAP), required for both lysine and peptidoglycan biosynthesis. Catalyzes the direct conversion of tetrahydrodipicolinate to LL-diaminopimelate. The sequence is that of LL-diaminopimelate aminotransferase from Synechocystis sp. (strain ATCC 27184 / PCC 6803 / Kazusa).